The primary structure comprises 112 residues: Putative pterin-4-alpha-carbinolamine dehydratase (112 aa).

The protein belongs to the pterin-4-alpha-carbinolamine dehydratase family.

It carries out the reaction (4aS,6R)-4a-hydroxy-L-erythro-5,6,7,8-tetrahydrobiopterin = (6R)-L-erythro-6,7-dihydrobiopterin + H2O. This Shewanella loihica (strain ATCC BAA-1088 / PV-4) protein is Putative pterin-4-alpha-carbinolamine dehydratase.